The following is a 234-amino-acid chain: uncharacterized protein (234 aa).

The tract at residues 212–234 (GKHLKLDSNTTENKTTKQNETGG) is disordered. The segment covering 220–234 (NTTENKTTKQNETGG) has biased composition (low complexity).

This is an uncharacterized protein from Methanothermobacter thermautotrophicus (Methanobacterium thermoformicicum).